The chain runs to 949 residues: Copper-transporting ATPase PAA1, chloroplastic (949 aa).

A chloroplast-targeting transit peptide spans 1 to 103 (MESTLSAFST…SSSPSFRSIS (103 aa)). The segment covering 113-126 (YNGGSGGGGGGGSE) has biased composition (gly residues). The disordered stretch occupies residues 113–142 (YNGGSGGGGGGGSESGDSKSKLGANASDGV). Positions 148–222 (DIIILDVGGM…HLTNCGFQST (75 aa)) constitute an HMA domain. Positions 159 and 162 each coordinate Cu(+). Transmembrane regions (helical) follow at residues 253–274 (LAVSWALCAVCLVGHLTHFLGV), 287–306 (FHVSLCLITLLGPGRKLVLD), 314–334 (GSPNMNTLVGLGALSSFSVSS), 349–369 (EEPVMLIAFVLLGRNLEQRAK), 502–524 (VAGRFTYGVMALSAATFTFWNLF), and 543–560 (LQLSCSVLVVACPCALGL). Catalysis depends on D598, which acts as the 4-aspartylphosphate intermediate. ATP is bound at residue 807–814 (GDGINDAA). Mg(2+) contacts are provided by D808 and D812. Helical transmembrane passes span 863 to 882 (KQNLWWAFGYNIVGIPIAAG) and 895 to 913 (SMAGALMGVSSLGVMTNSL). The segment at 925-949 (DKNVKPEPKEGTKQPHENTRWKQSS) is disordered.

It belongs to the cation transport ATPase (P-type) (TC 3.A.3) family. Type IB subfamily. Expressed in the shoots and roots.

It localises to the plastid. The protein resides in the chloroplast membrane. It carries out the reaction Cu(+)(in) + ATP + H2O = Cu(+)(out) + ADP + phosphate + H(+). Mediates copper transfer across the plastid envelope. Required for the delivery of copper into the plastid stroma, which is essential for the function of copper proteins. Seems to be selective for monovalent copper Cu(+) transport. Also plays a role in glucose signaling-mediated cell proliferation of root meristem in non-green tissues. In Arabidopsis thaliana (Mouse-ear cress), this protein is Copper-transporting ATPase PAA1, chloroplastic (PAA1).